Reading from the N-terminus, the 120-residue chain is Large ribosomal subunit protein bL20 (120 aa).

This sequence belongs to the bacterial ribosomal protein bL20 family.

Its function is as follows. Binds directly to 23S ribosomal RNA and is necessary for the in vitro assembly process of the 50S ribosomal subunit. It is not involved in the protein synthesizing functions of that subunit. This is Large ribosomal subunit protein bL20 from Chlamydia abortus (strain DSM 27085 / S26/3) (Chlamydophila abortus).